A 102-amino-acid polypeptide reads, in one-letter code: NADH-quinone oxidoreductase subunit K (102 aa).

3 consecutive transmembrane segments (helical) span residues 5-25 (LGHF…GIFL), 31-51 (IVLL…FVAF), and 62-82 (VFVF…LAIL).

The protein belongs to the complex I subunit 4L family. NDH-1 is composed of 14 different subunits. Subunits NuoA, H, J, K, L, M, N constitute the membrane sector of the complex.

It is found in the cell inner membrane. It carries out the reaction a quinone + NADH + 5 H(+)(in) = a quinol + NAD(+) + 4 H(+)(out). Functionally, NDH-1 shuttles electrons from NADH, via FMN and iron-sulfur (Fe-S) centers, to quinones in the respiratory chain. The immediate electron acceptor for the enzyme in this species is believed to be ubiquinone. Couples the redox reaction to proton translocation (for every two electrons transferred, four hydrogen ions are translocated across the cytoplasmic membrane), and thus conserves the redox energy in a proton gradient. The sequence is that of NADH-quinone oxidoreductase subunit K from Paracidovorax citrulli (strain AAC00-1) (Acidovorax citrulli).